The sequence spans 714 residues: Cadherin-13 (714 aa).

The signal sequence occupies residues 1–22; it reads MQPRTPLTLCVLLSQVLLVTSA. The propeptide occupies 23–138; that stretch reads DDLECTPGFQ…RTSPVPRQKR (116 aa). 5 Cadherin domains span residues 143–245, 246–363, 364–477, 478–585, and 586–680; these read SPIL…RPIF, REGP…SPKF, TKKE…GPVF, YPDP…APVI, and YPTV…VQVC. The tract at residues 156–183 is disordered; it reads PRDVGKVVDSDRPEGSKFRLTGKGVDQD. Residues 158-172 are compositionally biased toward basic and acidic residues; the sequence is DVGKVVDSDRPEGSK. N-linked (GlcNAc...) asparagine glycosylation is found at Asn382, Asn489, Asn500, Asn530, Asn598, Asn638, and Asn671. Gly693 is lipidated: GPI-anchor amidated glycine. The propeptide at 694-714 is removed in mature form; that stretch reads ALHLSLSLLLLFSLLSLLSGL.

In terms of assembly, by contrast to classical cadherins, homodimerization in trans is not mediated by cadherin EC1 domain strand-swapping, but instead through a homophilic adhesive interface which joins two elongated EC1-EC2 domains through a region near their Ca2+-binding sites to form a tetrahedral, X-like shape.

The protein resides in the cell membrane. Its subcellular location is the cytoplasm. Functionally, cadherins are calcium-dependent cell adhesion proteins. They preferentially interact with themselves in a homophilic manner in connecting cells; cadherins may thus contribute to the sorting of heterogeneous cell types. May act as a negative regulator of neural cell growth. The polypeptide is Cadherin-13 (Cdh13) (Mus musculus (Mouse)).